A 205-amino-acid polypeptide reads, in one-letter code: Delta-aminolevulinic acid dehydratase (205 aa).

Cys-117, Cys-119, and Cys-127 together coordinate Zn(2+). The Schiff-base intermediate with substrate role is filled by Lys-192. Arg-202 is a substrate binding site.

The protein belongs to the ALAD family. Homooctamer. Zn(2+) is required as a cofactor.

The enzyme catalyses 2 5-aminolevulinate = porphobilinogen + 2 H2O + H(+). It functions in the pathway porphyrin-containing compound metabolism; protoporphyrin-IX biosynthesis; coproporphyrinogen-III from 5-aminolevulinate: step 1/4. Catalyzes an early step in the biosynthesis of tetrapyrroles. Binds two molecules of 5-aminolevulinate per subunit, each at a distinct site, and catalyzes their condensation to form porphobilinogen. In Ruminiclostridium josui (Clostridium josui), this protein is Delta-aminolevulinic acid dehydratase (hemB).